Consider the following 163-residue polypeptide: Epididymal-specific lipocalin-6 (163 aa).

The first 20 residues, M1–A20, serve as a signal peptide directing secretion.

Belongs to the calycin superfamily. Lipocalin family. In terms of tissue distribution, predominantly expressed in epididymis.

The protein localises to the secreted. In terms of biological role, may play a role in male fertility. This Homo sapiens (Human) protein is Epididymal-specific lipocalin-6 (LCN6).